The sequence spans 957 residues: Glycine dehydrogenase (decarboxylating) (957 aa).

Residue K708 is modified to N6-(pyridoxal phosphate)lysine.

The protein belongs to the GcvP family. The glycine cleavage system is composed of four proteins: P, T, L and H. Pyridoxal 5'-phosphate serves as cofactor.

It catalyses the reaction N(6)-[(R)-lipoyl]-L-lysyl-[glycine-cleavage complex H protein] + glycine + H(+) = N(6)-[(R)-S(8)-aminomethyldihydrolipoyl]-L-lysyl-[glycine-cleavage complex H protein] + CO2. Functionally, the glycine cleavage system catalyzes the degradation of glycine. The P protein binds the alpha-amino group of glycine through its pyridoxal phosphate cofactor; CO(2) is released and the remaining methylamine moiety is then transferred to the lipoamide cofactor of the H protein. The sequence is that of Glycine dehydrogenase (decarboxylating) from Salmonella heidelberg (strain SL476).